We begin with the raw amino-acid sequence, 368 residues long: tRNA-specific 2-thiouridylase MnmA (368 aa).

ATP is bound by residues 11–18 (GMSGGVDS) and Met37. The interval 97 to 99 (NPD) is interaction with target base in tRNA. Catalysis depends on Cys102, which acts as the Nucleophile. An intrachain disulfide couples Cys102 to Cys199. ATP is bound at residue Gly127. The interval 149–151 (KDQ) is interaction with tRNA. Residue Cys199 is the Cysteine persulfide intermediate of the active site. Residues 311-312 (RY) form an interaction with tRNA region.

It belongs to the MnmA/TRMU family. In terms of assembly, interacts with TusE.

It localises to the cytoplasm. The enzyme catalyses S-sulfanyl-L-cysteinyl-[protein] + uridine(34) in tRNA + AH2 + ATP = 2-thiouridine(34) in tRNA + L-cysteinyl-[protein] + A + AMP + diphosphate + H(+). Its function is as follows. Catalyzes the 2-thiolation of uridine at the wobble position (U34) of tRNA(Lys), tRNA(Glu) and tRNA(Gln), leading to the formation of s(2)U34, the first step of tRNA-mnm(5)s(2)U34 synthesis. Sulfur is provided by IscS, via a sulfur-relay system. Binds ATP and its substrate tRNAs. The protein is tRNA-specific 2-thiouridylase MnmA of Escherichia coli O157:H7.